Reading from the N-terminus, the 322-residue chain is Putative A-type inclusion protein (322 aa).

The segment at 284–322 (LTTEATGSVEVAPPSTDVTEPISDVTPSVDVEPEHPPAF) is disordered.

The protein belongs to the chordopoxvirinae A26 protein family.

Its function is as follows. Encodes a truncated version of poxvirus A26 protein. The polypeptide is Putative A-type inclusion protein (Vaccinia virus (strain Copenhagen) (VACV)).